Reading from the N-terminus, the 149-residue chain is Transcriptional regulator MraZ (149 aa).

SpoVT-AbrB domains are found at residues 5 to 52 (ITTL…PLPE) and 81 to 124 (AEEC…DSMV).

The protein belongs to the MraZ family. As to quaternary structure, forms oligomers.

The protein resides in the cytoplasm. The protein localises to the nucleoid. This Nitrosococcus oceani (strain ATCC 19707 / BCRC 17464 / JCM 30415 / NCIMB 11848 / C-107) protein is Transcriptional regulator MraZ.